The chain runs to 325 residues: Oligopeptide transport system permease protein OppB (325 aa).

Transmembrane regions (helical) follow at residues 12-32, 102-122, 135-155, 189-208, 248-268, and 290-310; these read YLVL…LAFS, LVVG…WGAI, LALL…ILGA, LQHL…AGFS, IPMA…AVFV, and TNIV…AGLL. Residues 95–311 form the ABC transmembrane type-1 domain; sequence IGVSLRLLVV…AVVLLAGLLS (217 aa).

It belongs to the binding-protein-dependent transport system permease family. OppBC subfamily. The complex is composed of an ATP-binding protein (OppD), two transmembrane proteins (OppB and OppC) and a solute-binding protein (OppA).

The protein localises to the cell inner membrane. Its function is as follows. Part of the ABC transporter complex OppABCD involved in the uptake of oligopeptides. Responsible for the translocation of the substrate across the membrane. The polypeptide is Oligopeptide transport system permease protein OppB (Mycobacterium bovis (strain ATCC BAA-935 / AF2122/97)).